We begin with the raw amino-acid sequence, 1703 residues long: Stress response protein NST1 (1703 aa).

Disordered stretches follow at residues 1–91, 243–288, 347–484, 566–724, 759–807, 843–1292, 1353–1407, 1424–1465, 1516–1537, 1558–1581, 1595–1637, and 1672–1703; these read MAKS…AKDA, DQPL…PLPP, HALR…IWST, VSSG…GLGS, MHRE…EQRM, LREL…LGAP, FSPM…IGPI, HTGA…DIID, SSFSGNNPTAPGPLSPAFNGGG, ASTPGAGSSGSGMAGGAASDPWAR, EQPG…HHQL, and GAPGSNALHPGAIGSALSPTLPGARHVSGSHE. Over residues 7 to 36 the composition is skewed to low complexity; the sequence is PRSTPAARAAAVPPPRLAAAAQQQHHQQQP. The segment covering 37-48 has biased composition (pro residues); it reads PSTPPAPVPPTK. Over residues 57–66 the composition is skewed to polar residues; that stretch reads PPRSASPVSN. The span at 77–86 shows a compositional bias: basic residues; sequence AKKKKKKSKS. The segment covering 253–273 has biased composition (polar residues); sequence NTANNAHPTNVNGAYGQYSSS. The segment covering 274 to 288 has biased composition (pro residues); sequence PNPPPTQPPVEPLPP. Residues 365–376 show a composition bias toward basic residues; the sequence is SKNKKKKKKKKG. The span at 384-393 shows a compositional bias: basic and acidic residues; that stretch reads HGDDEAHEIE. Residues 396 to 409 are compositionally biased toward pro residues; sequence VPPPKPVPNHPPPS. Low complexity-rich tracts occupy residues 410–419 and 453–464; these read TNVSSVARNS and SSNSGKRSVSSS. Positions 572-581 are enriched in pro residues; the sequence is IPPPPGPGPF. Basic residues predominate over residues 614-650; the sequence is THTHTHAHTHTHTHTHTHTHTHAHQHPHPHPHGRKAS. Residues 657 to 690 show a composition bias toward acidic residues; that stretch reads DGYDDDELDDDAEYDDDDDDADYDDEDEDDDVEL. The span at 691 to 703 shows a compositional bias: basic and acidic residues; sequence EKERAREDYDKRN. A coiled-coil region spans residues 748–1031; the sequence is LEMMEQLAER…AKQAAAAASR (284 aa). Residues 771–802 show a composition bias toward acidic residues; it reads ASDDEDDVDGPDDVDDEDLDEEDEDEEDEILT. Basic and acidic residues-rich tracts occupy residues 853-866, 874-896, and 904-1023; these read EKAREARRMKESQK, QREAKEAERLKKDQERAAAEAEV, and RDAE…REAK. 2 stretches are compositionally biased toward low complexity: residues 1024 to 1037 and 1111 to 1135; these read QAAAAASRGASAAQ and AGGLAAAVAASSVAPAGSSSNAVGS. Over residues 1138-1148 the composition is skewed to pro residues; it reads PAPPQGLPPRP. The segment covering 1158–1167 has biased composition (low complexity); sequence SSSQTSSVSV. Positions 1200 to 1219 are enriched in polar residues; it reads LNAQSNVPMPSAKTPGSSIS. A compositionally biased stretch (low complexity) spans 1269 to 1291; that stretch reads QNSGMFGSNGSMSSSLQSPSLGA. The span at 1431 to 1444 shows a compositional bias: low complexity; the sequence is GRSSSTTSGSGATS. Gly residues predominate over residues 1598–1619; sequence GGNGVGAGSNGGTPSGLGGIGG.

It belongs to the NST1 family.

The protein localises to the cytoplasm. Functionally, may act as a negative regulator of salt tolerance. In Mycosarcoma maydis (Corn smut fungus), this protein is Stress response protein NST1 (NST1).